The chain runs to 283 residues: MPAQLIDGNALAKQIRSEAAQRAARLTERGHQPGLAVVLVGEDPASQVYVRNKVKACEDNGFHSSLDRYPADLSEADLLARIDELNRDPRIHGILVQLPLPKHIDSHKVLEAIAPEKDVDGFHVANAGALMTGAPLFRPCTPYGCMKMLESIQYPLRGARAVVVGASNIVGKPMAMLLLQGGATVTICNSKTRDIGAHTRDADVVVAAVGKRNLITADMVKPGAVVIDVGMNRDDHGKLCGDVDFAGVREVAGYITPVPGGVGPMTITMLLINTLEAAERAAG.

Residues 165–167 (GAS) and S190 each bind NADP(+).

This sequence belongs to the tetrahydrofolate dehydrogenase/cyclohydrolase family. As to quaternary structure, homodimer.

The enzyme catalyses (6R)-5,10-methylene-5,6,7,8-tetrahydrofolate + NADP(+) = (6R)-5,10-methenyltetrahydrofolate + NADPH. It carries out the reaction (6R)-5,10-methenyltetrahydrofolate + H2O = (6R)-10-formyltetrahydrofolate + H(+). Its pathway is one-carbon metabolism; tetrahydrofolate interconversion. In terms of biological role, catalyzes the oxidation of 5,10-methylenetetrahydrofolate to 5,10-methenyltetrahydrofolate and then the hydrolysis of 5,10-methenyltetrahydrofolate to 10-formyltetrahydrofolate. This is Bifunctional protein FolD from Cupriavidus taiwanensis (strain DSM 17343 / BCRC 17206 / CCUG 44338 / CIP 107171 / LMG 19424 / R1) (Ralstonia taiwanensis (strain LMG 19424)).